A 533-amino-acid chain; its full sequence is Probable lipid II flippase MurJ (533 aa).

The next 14 helical transmembrane spans lie at leucine 11–leucine 31, alanine 39–isoleucine 61, leucine 96–isoleucine 116, leucine 135–leucine 155, isoleucine 166–leucine 186, tryptophan 196–leucine 216, leucine 253–proline 273, phenylalanine 284–valine 304, leucine 330–isoleucine 350, alanine 360–glycine 380, valine 400–glycine 420, valine 422–methionine 442, leucine 452–alanine 472, and isoleucine 493–leucine 513.

This sequence belongs to the MurJ/MviN family.

Its subcellular location is the cell inner membrane. It functions in the pathway cell wall biogenesis; peptidoglycan biosynthesis. In terms of biological role, involved in peptidoglycan biosynthesis. Transports lipid-linked peptidoglycan precursors from the inner to the outer leaflet of the cytoplasmic membrane. The sequence is that of Probable lipid II flippase MurJ from Synechocystis sp. (strain ATCC 27184 / PCC 6803 / Kazusa).